The primary structure comprises 206 residues: CASP-like protein 4B2 (206 aa).

Low complexity-rich tracts occupy residues 1 to 12 (MAMVPADADAAA) and 24 to 36 (SSQN…AAAA). Positions 1-42 (MAMVPADADAAAKPPPDVEKPDYSSQNGAPNSAAAAAGGGGG) are disordered. The Cytoplasmic segment spans residues 1 to 60 (MAMVPADADAAAKPPPDVEKPDYSSQNGAPNSAAAAAGGGGGGVVDSVVARWRREDMLDK). A helical transmembrane segment spans residues 61–81 (SPLALHAAAAAFAFVALVLVA). The Extracellular segment spans residues 82 to 99 (SNQHGDWMEFDRYQEYRY). Residues 100–120 (LLAIAALAFAYSLAQALRHAL) traverse the membrane as a helical segment. Residues 121 to 138 (RMRRGVDPVPTASGRLLD) are Cytoplasmic-facing. The helical transmembrane segment at 139-159 (FASDQVVAYLLMSALSAATPI) threads the bilayer. The Extracellular portion of the chain corresponds to 160 to 174 (TNRMRSAVINRFTDT). The helical transmembrane segment at 175-195 (TAAAISMAFLAFVSLALSAIV) threads the bilayer. The Cytoplasmic portion of the chain corresponds to 196–206 (SGYKLSKQTYM).

This sequence belongs to the Casparian strip membrane proteins (CASP) family. As to quaternary structure, homodimer and heterodimers.

It is found in the cell membrane. The polypeptide is CASP-like protein 4B2 (Oryza sativa subsp. japonica (Rice)).